We begin with the raw amino-acid sequence, 147 residues long: UPF0306 protein YhbP (147 aa).

This sequence belongs to the UPF0306 family.

The polypeptide is UPF0306 protein YhbP (Escherichia coli (strain K12 / MC4100 / BW2952)).